Reading from the N-terminus, the 321-residue chain is Acetyl-coenzyme A carboxylase carboxyl transferase subunit alpha (321 aa).

One can recognise a CoA carboxyltransferase C-terminal domain in the interval 39–293 (RLQQKSQNLA…RRALGDALRQ (255 aa)).

This sequence belongs to the AccA family. In terms of assembly, acetyl-CoA carboxylase is a heterohexamer composed of biotin carboxyl carrier protein (AccB), biotin carboxylase (AccC) and two subunits each of ACCase subunit alpha (AccA) and ACCase subunit beta (AccD).

It localises to the cytoplasm. The enzyme catalyses N(6)-carboxybiotinyl-L-lysyl-[protein] + acetyl-CoA = N(6)-biotinyl-L-lysyl-[protein] + malonyl-CoA. It functions in the pathway lipid metabolism; malonyl-CoA biosynthesis; malonyl-CoA from acetyl-CoA: step 1/1. In terms of biological role, component of the acetyl coenzyme A carboxylase (ACC) complex. First, biotin carboxylase catalyzes the carboxylation of biotin on its carrier protein (BCCP) and then the CO(2) group is transferred by the carboxyltransferase to acetyl-CoA to form malonyl-CoA. In Bordetella bronchiseptica (strain ATCC BAA-588 / NCTC 13252 / RB50) (Alcaligenes bronchisepticus), this protein is Acetyl-coenzyme A carboxylase carboxyl transferase subunit alpha.